Consider the following 271-residue polypeptide: L-aspartate dehydrogenase (271 aa).

Residues alanine 124 and asparagine 192 each coordinate NAD(+). The active site involves histidine 222.

Belongs to the L-aspartate dehydrogenase family.

It catalyses the reaction L-aspartate + NADP(+) + H2O = oxaloacetate + NH4(+) + NADPH + H(+). The enzyme catalyses L-aspartate + NAD(+) + H2O = oxaloacetate + NH4(+) + NADH + H(+). It participates in cofactor biosynthesis; NAD(+) biosynthesis; iminoaspartate from L-aspartate (dehydrogenase route): step 1/1. In terms of biological role, specifically catalyzes the NAD or NADP-dependent dehydrogenation of L-aspartate to iminoaspartate. The protein is L-aspartate dehydrogenase of Methanococcoides burtonii (strain DSM 6242 / NBRC 107633 / OCM 468 / ACE-M).